Consider the following 271-residue polypeptide: Formamidopyrimidine-DNA glycosylase (271 aa).

Residue Pro2 is the Schiff-base intermediate with DNA of the active site. The active-site Proton donor is the Glu3. The active-site Proton donor; for beta-elimination activity is the Lys58. Positions 92, 111, and 152 each coordinate DNA. The segment at 237–271 (YVYGKVQKPCKICNNIITLIRQNGRSTYFCNACQN) adopts an FPG-type zinc-finger fold. The Proton donor; for delta-elimination activity role is filled by Arg261.

This sequence belongs to the FPG family. Monomer. The cofactor is Zn(2+).

The enzyme catalyses Hydrolysis of DNA containing ring-opened 7-methylguanine residues, releasing 2,6-diamino-4-hydroxy-5-(N-methyl)formamidopyrimidine.. It catalyses the reaction 2'-deoxyribonucleotide-(2'-deoxyribose 5'-phosphate)-2'-deoxyribonucleotide-DNA = a 3'-end 2'-deoxyribonucleotide-(2,3-dehydro-2,3-deoxyribose 5'-phosphate)-DNA + a 5'-end 5'-phospho-2'-deoxyribonucleoside-DNA + H(+). Involved in base excision repair of DNA damaged by oxidation or by mutagenic agents. Acts as a DNA glycosylase that recognizes and removes damaged bases. Has a preference for oxidized purines, such as 7,8-dihydro-8-oxoguanine (8-oxoG). Has AP (apurinic/apyrimidinic) lyase activity and introduces nicks in the DNA strand. Cleaves the DNA backbone by beta-delta elimination to generate a single-strand break at the site of the removed base with both 3'- and 5'-phosphates. This Wolbachia sp. subsp. Drosophila simulans (strain wRi) protein is Formamidopyrimidine-DNA glycosylase.